A 219-amino-acid polypeptide reads, in one-letter code: Phosphate-specific transport system accessory protein PhoU homolog 1 (219 aa).

The protein belongs to the PhoU family. In terms of assembly, homodimer.

Its subcellular location is the cytoplasm. Functionally, plays a role in the regulation of phosphate uptake. The chain is Phosphate-specific transport system accessory protein PhoU homolog 1 from Methanothermobacter thermautotrophicus (strain ATCC 29096 / DSM 1053 / JCM 10044 / NBRC 100330 / Delta H) (Methanobacterium thermoautotrophicum).